A 115-amino-acid polypeptide reads, in one-letter code: NADH-ubiquinone oxidoreductase chain 3 (115 aa).

A run of 3 helical transmembrane segments spans residues 3 to 23 (LIMT…IAFW), 55 to 75 (FFLV…LLPL), and 84 to 104 (LTTM…SLAY).

The protein belongs to the complex I subunit 3 family. In terms of assembly, core subunit of respiratory chain NADH dehydrogenase (Complex I) which is composed of 45 different subunits. Interacts with TMEM186. Interacts with TMEM242.

The protein localises to the mitochondrion inner membrane. The catalysed reaction is a ubiquinone + NADH + 5 H(+)(in) = a ubiquinol + NAD(+) + 4 H(+)(out). In terms of biological role, core subunit of the mitochondrial membrane respiratory chain NADH dehydrogenase (Complex I) which catalyzes electron transfer from NADH through the respiratory chain, using ubiquinone as an electron acceptor. Essential for the catalytic activity of complex I. This chain is NADH-ubiquinone oxidoreductase chain 3, found in Ailurus fulgens (Himalayan red panda).